Reading from the N-terminus, the 92-residue chain is Small ribosomal subunit protein uS17 (92 aa).

This sequence belongs to the universal ribosomal protein uS17 family. As to quaternary structure, part of the 30S ribosomal subunit.

Functionally, one of the primary rRNA binding proteins, it binds specifically to the 5'-end of 16S ribosomal RNA. In Wigglesworthia glossinidia brevipalpis, this protein is Small ribosomal subunit protein uS17.